A 220-amino-acid polypeptide reads, in one-letter code: GTP cyclohydrolase 1 (220 aa).

The Zn(2+) site is built by cysteine 109, histidine 112, and cysteine 180.

Belongs to the GTP cyclohydrolase I family. In terms of assembly, toroid-shaped homodecamer, composed of two pentamers of five dimers.

The catalysed reaction is GTP + H2O = 7,8-dihydroneopterin 3'-triphosphate + formate + H(+). It participates in cofactor biosynthesis; 7,8-dihydroneopterin triphosphate biosynthesis; 7,8-dihydroneopterin triphosphate from GTP: step 1/1. This chain is GTP cyclohydrolase 1, found in Yersinia enterocolitica serotype O:8 / biotype 1B (strain NCTC 13174 / 8081).